Reading from the N-terminus, the 107-residue chain is uncharacterized protein (107 aa).

Over Met1–Val4 the chain is Cytoplasmic. The chain crosses the membrane as a helical span at residues Ile5 to Ile25. The Extracellular segment spans residues Lys26–Lys107.

It localises to the host membrane. This is an uncharacterized protein from Acidianus sp. F28 (AFV-2).